We begin with the raw amino-acid sequence, 118 residues long: Succinate dehydrogenase assembly factor 4, mitochondrial (118 aa).

The N-terminal 30 residues, 1–30 (MQSVTRQTARVLPQMGKQVSYLSTSGAWRA), are a transit peptide targeting the mitochondrion. A disordered region spans residues 65–118 (GKLDEFSRHPYQEKEPLKPWPNQTNPYTGEIGGPAGPEPTRYGDWERKGRVSDF). Basic and acidic residues-rich tracts occupy residues 66-81 (KLDE…KEPL) and 105-118 (RYGD…VSDF).

The protein belongs to the SDHAF4 family. In terms of assembly, interacts with SdhA in its FAD-bound form.

It localises to the mitochondrion matrix. In terms of biological role, plays an essential role in the assembly of succinate dehydrogenase (SDH), an enzyme complex (also referred to as respiratory complex II) that is a component of both the tricarboxylic acid (TCA) cycle and the mitochondrial electron transport chain, and which couples the oxidation of succinate to fumarate with the reduction of ubiquinone (coenzyme Q) to ubiquinol. Binds to the flavoprotein subunit SdhA in its FAD-bound form, blocking the generation of excess reactive oxygen species (ROS) and facilitating its assembly with the iron-sulfur protein subunit SdhB into the SDH catalytic dimer. The protein is Succinate dehydrogenase assembly factor 4, mitochondrial of Drosophila melanogaster (Fruit fly).